We begin with the raw amino-acid sequence, 439 residues long: Enolase (439 aa).

Position 163 (Gln163) interacts with (2R)-2-phosphoglycerate. The active-site Proton donor is Glu205. Mg(2+)-binding residues include Asp242, Glu287, and Asp314. 4 residues coordinate (2R)-2-phosphoglycerate: Lys339, Arg368, Ser369, and Lys390. The active-site Proton acceptor is Lys339.

Belongs to the enolase family. Requires Mg(2+) as cofactor.

The protein resides in the cytoplasm. The protein localises to the secreted. It localises to the cell surface. It carries out the reaction (2R)-2-phosphoglycerate = phosphoenolpyruvate + H2O. It functions in the pathway carbohydrate degradation; glycolysis; pyruvate from D-glyceraldehyde 3-phosphate: step 4/5. Catalyzes the reversible conversion of 2-phosphoglycerate (2-PG) into phosphoenolpyruvate (PEP). It is essential for the degradation of carbohydrates via glycolysis. The chain is Enolase from Levilactobacillus brevis (strain ATCC 367 / BCRC 12310 / CIP 105137 / JCM 1170 / LMG 11437 / NCIMB 947 / NCTC 947) (Lactobacillus brevis).